We begin with the raw amino-acid sequence, 156 residues long: Small ribosomal subunit protein uS7 (156 aa).

This sequence belongs to the universal ribosomal protein uS7 family. Part of the 30S ribosomal subunit. Contacts proteins S9 and S11.

Functionally, one of the primary rRNA binding proteins, it binds directly to 16S rRNA where it nucleates assembly of the head domain of the 30S subunit. Is located at the subunit interface close to the decoding center, probably blocks exit of the E-site tRNA. The polypeptide is Small ribosomal subunit protein uS7 (Streptomyces avermitilis (strain ATCC 31267 / DSM 46492 / JCM 5070 / NBRC 14893 / NCIMB 12804 / NRRL 8165 / MA-4680)).